A 376-amino-acid polypeptide reads, in one-letter code: 2-oxoglutarate synthase subunit KorA (376 aa).

In terms of assembly, heterotetramer of the KorA, KorB, KorC and KorD subunits.

It carries out the reaction 2 oxidized [2Fe-2S]-[ferredoxin] + 2-oxoglutarate + CoA = succinyl-CoA + 2 reduced [2Fe-2S]-[ferredoxin] + CO2 + H(+). This is 2-oxoglutarate synthase subunit KorA (korA) from Methanothermobacter thermautotrophicus (strain ATCC 29096 / DSM 1053 / JCM 10044 / NBRC 100330 / Delta H) (Methanobacterium thermoautotrophicum).